The following is a 264-amino-acid chain: Ribosomal RNA small subunit methyltransferase A (264 aa).

The S-adenosyl-L-methionine site is built by N15, I17, G42, E64, D90, and N109.

It belongs to the class I-like SAM-binding methyltransferase superfamily. rRNA adenine N(6)-methyltransferase family. RsmA subfamily.

It is found in the cytoplasm. It catalyses the reaction adenosine(1518)/adenosine(1519) in 16S rRNA + 4 S-adenosyl-L-methionine = N(6)-dimethyladenosine(1518)/N(6)-dimethyladenosine(1519) in 16S rRNA + 4 S-adenosyl-L-homocysteine + 4 H(+). Its function is as follows. Specifically dimethylates two adjacent adenosines (A1518 and A1519) in the loop of a conserved hairpin near the 3'-end of 16S rRNA in the 30S particle. May play a critical role in biogenesis of 30S subunits. The sequence is that of Ribosomal RNA small subunit methyltransferase A from Wolbachia pipientis subsp. Culex pipiens (strain wPip).